The following is a 321-amino-acid chain: MADRDSGSEQGGAALGSGGSLGHPGSGSGSGGGGGGGGGGGGSGGGGGAPGGLQHETQELASKRVDIQNKRFYLDVKQNAKGRFLKIAEVGAGGNKSRLTLSMSVAVEFRDYLGDFIEHYAQLGPSQPPDLAQAQDEPRRALKSEFLVRENRKYYMDLKENQRGRFLRIRQTVNRGPGLGSTQGQTIALPAQGLIEFRDALAKLIDDYGVEEEPAELPEGTSLTVDNKRFFFDVGSNKYGVFMRVSEVKPTYRNSITVPYKVWAKFGHTFCKYSEEMKKIQEKQREKRAACEQLHQQQQQQQEETTAATLLLQGEEEGEED.

Residues 1 to 54 (MADRDSGSEQGGAALGSGGSLGHPGSGSGSGGGGGGGGGGGGSGGGGGAPGGLQ) form a disordered region. Position 2 is an N-acetylalanine (Ala-2). Residues 9–51 (EQGGAALGSGGSLGHPGSGSGSGGGGGGGGGGGGSGGGGGAPG) show a composition bias toward gly residues. A Phosphoserine modification is found at Ser-181. Residues 294–313 (LHQQQQQQQEETTAATLLLQ) are compositionally biased toward low complexity. Positions 294–321 (LHQQQQQQQEETTAATLLLQGEEEGEED) are disordered.

This sequence belongs to the PUR DNA-binding protein family. As to quaternary structure, homodimer, heterodimer with PURB and heterotrimer with PURB and YBX1/Y-box protein 1. Interacts with FMR1; this interaction occurs in association with polyribosome.

The protein localises to the nucleus. In terms of biological role, this is a probable transcription activator that specifically binds the purine-rich single strand of the PUR element located upstream of the c-Myc gene. May play a role in the initiation of DNA replication and in recombination. In Mus musculus (Mouse), this protein is Transcriptional activator protein Pur-alpha (Pura).